The primary structure comprises 321 residues: Ribose-phosphate pyrophosphokinase (321 aa).

ATP is bound by residues 44–46 (DGE) and 103–104 (RQ). Mg(2+) is bound by residues histidine 137 and aspartate 179. Lysine 202 is an active-site residue. D-ribose 5-phosphate contacts are provided by residues arginine 204, aspartate 228, and 232–236 (DTAGT).

This sequence belongs to the ribose-phosphate pyrophosphokinase family. Class I subfamily. Homohexamer. It depends on Mg(2+) as a cofactor.

The protein resides in the cytoplasm. It carries out the reaction D-ribose 5-phosphate + ATP = 5-phospho-alpha-D-ribose 1-diphosphate + AMP + H(+). It functions in the pathway metabolic intermediate biosynthesis; 5-phospho-alpha-D-ribose 1-diphosphate biosynthesis; 5-phospho-alpha-D-ribose 1-diphosphate from D-ribose 5-phosphate (route I): step 1/1. In terms of biological role, involved in the biosynthesis of the central metabolite phospho-alpha-D-ribosyl-1-pyrophosphate (PRPP) via the transfer of pyrophosphoryl group from ATP to 1-hydroxyl of ribose-5-phosphate (Rib-5-P). The chain is Ribose-phosphate pyrophosphokinase from Staphylococcus epidermidis (strain ATCC 35984 / DSM 28319 / BCRC 17069 / CCUG 31568 / BM 3577 / RP62A).